We begin with the raw amino-acid sequence, 266 residues long: Transcription factor BIP1 (266 aa).

The tract at residues 1-73 (MAMYMPSTAS…DREAQRAIRA (73 aa)) is disordered. Composition is skewed to polar residues over residues 7–22 (STAS…SGTP) and 47–56 (RSVSTLTPSQ). The region spanning 54 to 95 (PSQLARKRANDREAQRAIRARTKEHIERLEREVEELKSKQNR) is the bZIP domain. The basic motif stretch occupies residues 59-81 (RKRANDREAQRAIRARTKEHIER). Residues 61-73 (RANDREAQRAIRA) show a composition bias toward basic and acidic residues. The segment at 82–89 (LEREVEEL) is leucine-zipper.

Belongs to the bZIP family. In terms of tissue distribution, expressed in appressoria.

It is found in the nucleus. Transcription factor that is required for infection of plants hosts. Is not implicated in the development of appressoria or the subsequent penetration of host leaves, but is necessary for the initial establishment of the fungus within plant cells by orchestrating the expression of a unique set of early invasion-related genes within appressoria, encoding secreted effectors, enzymes, secondary metabolism-related enzymes, and signaling membrane receptors. Controls the expression of targeted genes by interacting directly with a 5'-TGACTC-3' motif present in their promoters. The sequence is that of Transcription factor BIP1 from Pyricularia oryzae (strain 70-15 / ATCC MYA-4617 / FGSC 8958) (Rice blast fungus).